A 94-amino-acid chain; its full sequence is Exodeoxyribonuclease 7 small subunit (94 aa).

The disordered stretch occupies residues M1–S21.

It belongs to the XseB family. Heterooligomer composed of large and small subunits.

The protein resides in the cytoplasm. The catalysed reaction is Exonucleolytic cleavage in either 5'- to 3'- or 3'- to 5'-direction to yield nucleoside 5'-phosphates.. Its function is as follows. Bidirectionally degrades single-stranded DNA into large acid-insoluble oligonucleotides, which are then degraded further into small acid-soluble oligonucleotides. This is Exodeoxyribonuclease 7 small subunit from Ralstonia pickettii (strain 12J).